A 236-amino-acid chain; its full sequence is Pyridoxine 5'-phosphate synthase (236 aa).

Asn7 contacts 3-amino-2-oxopropyl phosphate. Position 9-10 (9-10 (DH)) interacts with 1-deoxy-D-xylulose 5-phosphate. Arg18 provides a ligand contact to 3-amino-2-oxopropyl phosphate. Residue His43 is the Proton acceptor of the active site. 1-deoxy-D-xylulose 5-phosphate contacts are provided by Arg45 and His50. The active-site Proton acceptor is the Glu69. Thr99 is a binding site for 1-deoxy-D-xylulose 5-phosphate. His190 acts as the Proton donor in catalysis. 3-amino-2-oxopropyl phosphate-binding positions include Gly191 and 212–213 (GH).

Belongs to the PNP synthase family. Homooctamer; tetramer of dimers.

The protein localises to the cytoplasm. The enzyme catalyses 3-amino-2-oxopropyl phosphate + 1-deoxy-D-xylulose 5-phosphate = pyridoxine 5'-phosphate + phosphate + 2 H2O + H(+). The protein operates within cofactor biosynthesis; pyridoxine 5'-phosphate biosynthesis; pyridoxine 5'-phosphate from D-erythrose 4-phosphate: step 5/5. In terms of biological role, catalyzes the complicated ring closure reaction between the two acyclic compounds 1-deoxy-D-xylulose-5-phosphate (DXP) and 3-amino-2-oxopropyl phosphate (1-amino-acetone-3-phosphate or AAP) to form pyridoxine 5'-phosphate (PNP) and inorganic phosphate. The chain is Pyridoxine 5'-phosphate synthase from Desulfosudis oleivorans (strain DSM 6200 / JCM 39069 / Hxd3) (Desulfococcus oleovorans).